Reading from the N-terminus, the 145-residue chain is MTILGIGLDLVTISEFAEQLERTGTTMLRESFTAGERRYCQSKGTDPARSYAARWAAKEAVLKAWASSRFARRPQIGDNPYPLIEVVNDAWGRPSIKLHGLAAEFLPRVRVHLSLTHDGDTAAAMVVLEDPGELADLIEGREATP.

D9 and E59 together coordinate Mg(2+).

Belongs to the P-Pant transferase superfamily. AcpS family. The cofactor is Mg(2+).

Its subcellular location is the cytoplasm. The catalysed reaction is apo-[ACP] + CoA = holo-[ACP] + adenosine 3',5'-bisphosphate + H(+). Transfers the 4'-phosphopantetheine moiety from coenzyme A to a Ser of acyl-carrier-protein. This is Holo-[acyl-carrier-protein] synthase from Nocardia farcinica (strain IFM 10152).